Reading from the N-terminus, the 314-residue chain is 4-hydroxy-3-methylbut-2-enyl diphosphate reductase (314 aa).

[4Fe-4S] cluster is bound at residue cysteine 12. Positions 41 and 74 each coordinate (2E)-4-hydroxy-3-methylbut-2-enyl diphosphate. Dimethylallyl diphosphate-binding residues include histidine 41 and histidine 74. Isopentenyl diphosphate is bound by residues histidine 41 and histidine 74. Cysteine 96 lines the [4Fe-4S] cluster pocket. Position 124 (histidine 124) interacts with (2E)-4-hydroxy-3-methylbut-2-enyl diphosphate. Dimethylallyl diphosphate is bound at residue histidine 124. Histidine 124 provides a ligand contact to isopentenyl diphosphate. Glutamate 126 functions as the Proton donor in the catalytic mechanism. (2E)-4-hydroxy-3-methylbut-2-enyl diphosphate is bound at residue threonine 168. A [4Fe-4S] cluster-binding site is contributed by cysteine 198. Residues serine 226, serine 227, asparagine 228, and serine 270 each coordinate (2E)-4-hydroxy-3-methylbut-2-enyl diphosphate. Positions 226, 227, 228, and 270 each coordinate dimethylallyl diphosphate. Isopentenyl diphosphate is bound by residues serine 226, serine 227, asparagine 228, and serine 270.

This sequence belongs to the IspH family. Requires [4Fe-4S] cluster as cofactor.

It carries out the reaction isopentenyl diphosphate + 2 oxidized [2Fe-2S]-[ferredoxin] + H2O = (2E)-4-hydroxy-3-methylbut-2-enyl diphosphate + 2 reduced [2Fe-2S]-[ferredoxin] + 2 H(+). The enzyme catalyses dimethylallyl diphosphate + 2 oxidized [2Fe-2S]-[ferredoxin] + H2O = (2E)-4-hydroxy-3-methylbut-2-enyl diphosphate + 2 reduced [2Fe-2S]-[ferredoxin] + 2 H(+). The protein operates within isoprenoid biosynthesis; dimethylallyl diphosphate biosynthesis; dimethylallyl diphosphate from (2E)-4-hydroxy-3-methylbutenyl diphosphate: step 1/1. Its pathway is isoprenoid biosynthesis; isopentenyl diphosphate biosynthesis via DXP pathway; isopentenyl diphosphate from 1-deoxy-D-xylulose 5-phosphate: step 6/6. Functionally, catalyzes the conversion of 1-hydroxy-2-methyl-2-(E)-butenyl 4-diphosphate (HMBPP) into a mixture of isopentenyl diphosphate (IPP) and dimethylallyl diphosphate (DMAPP). Acts in the terminal step of the DOXP/MEP pathway for isoprenoid precursor biosynthesis. In Ectopseudomonas mendocina (strain ymp) (Pseudomonas mendocina), this protein is 4-hydroxy-3-methylbut-2-enyl diphosphate reductase.